The following is a 475-amino-acid chain: Putative response regulator NtrX-like (475 aa).

Residues 5-121 form the Response regulatory domain; the sequence is DVLILDDEES…KLIILLKRAC (117 aa). Asp-54 is subject to 4-aspartylphosphate. Residues 143–369 form the Sigma-54 factor interaction domain; it reads LVGGCSVTLK…LRNVVEWTLI (227 aa). ATP is bound by residues 171–178 and 232–241; these read GKVGSGKE and ANNGTLYIDE.

Member of the two-component regulatory system RT0550/RT0603. This is Putative response regulator NtrX-like from Rickettsia typhi (strain ATCC VR-144 / Wilmington).